Consider the following 36-residue polypeptide: Neuropeptide F (36 aa).

A Phenylalanine amide modification is found at phenylalanine 36.

This sequence belongs to the NPY family. As to expression, central and peripheral nervous system, and muscular pharynx.

The protein localises to the secreted. In terms of biological role, may perform an important neurotransmitter function and may regulate muscular activity. The chain is Neuropeptide F from Arthurdendyus triangulatus (New Zealand flatworm).